Reading from the N-terminus, the 123-residue chain is Small ribosomal subunit protein uS12 (123 aa).

Positions 1–28 (MPTIQQLIRTERSKVQKKTKSPALKQCP) are disordered. Asp-89 carries the post-translational modification 3-methylthioaspartic acid. The disordered stretch occupies residues 104 to 123 (ATGVKDRKQGRSKYGTKRPK). A compositionally biased stretch (basic residues) spans 113-123 (GRSKYGTKRPK).

Belongs to the universal ribosomal protein uS12 family. Part of the 30S ribosomal subunit. Contacts proteins S8 and S17. May interact with IF1 in the 30S initiation complex.

Its function is as follows. With S4 and S5 plays an important role in translational accuracy. Functionally, interacts with and stabilizes bases of the 16S rRNA that are involved in tRNA selection in the A site and with the mRNA backbone. Located at the interface of the 30S and 50S subunits, it traverses the body of the 30S subunit contacting proteins on the other side and probably holding the rRNA structure together. The combined cluster of proteins S8, S12 and S17 appears to hold together the shoulder and platform of the 30S subunit. This chain is Small ribosomal subunit protein uS12, found in Gloeothece citriformis (strain PCC 7424) (Cyanothece sp. (strain PCC 7424)).